We begin with the raw amino-acid sequence, 343 residues long: UDP-3-O-acylglucosamine N-acyltransferase 2 (343 aa).

Catalysis depends on H251, which acts as the Proton acceptor.

It belongs to the transferase hexapeptide repeat family. LpxD subfamily. As to quaternary structure, homotrimer.

The enzyme catalyses a UDP-3-O-[(3R)-3-hydroxyacyl]-alpha-D-glucosamine + a (3R)-hydroxyacyl-[ACP] = a UDP-2-N,3-O-bis[(3R)-3-hydroxyacyl]-alpha-D-glucosamine + holo-[ACP] + H(+). The protein operates within bacterial outer membrane biogenesis; LPS lipid A biosynthesis. Catalyzes the N-acylation of UDP-3-O-acylglucosamine using 3-hydroxyacyl-ACP as the acyl donor. Is involved in the biosynthesis of lipid A, a phosphorylated glycolipid that anchors the lipopolysaccharide to the outer membrane of the cell. The chain is UDP-3-O-acylglucosamine N-acyltransferase 2 from Legionella pneumophila (strain Paris).